Consider the following 365-residue polypeptide: 3-dehydroquinate synthase (365 aa).

NAD(+) is bound by residues 69 to 74 (DGEAHK), 103 to 107 (GVIGD), 127 to 128 (TT), Lys140, and Lys149. Residues Glu182, His245, and His262 each contribute to the Zn(2+) site.

The protein belongs to the sugar phosphate cyclases superfamily. Dehydroquinate synthase family. Co(2+) serves as cofactor. It depends on Zn(2+) as a cofactor. NAD(+) is required as a cofactor.

The protein resides in the cytoplasm. It carries out the reaction 7-phospho-2-dehydro-3-deoxy-D-arabino-heptonate = 3-dehydroquinate + phosphate. It functions in the pathway metabolic intermediate biosynthesis; chorismate biosynthesis; chorismate from D-erythrose 4-phosphate and phosphoenolpyruvate: step 2/7. Catalyzes the conversion of 3-deoxy-D-arabino-heptulosonate 7-phosphate (DAHP) to dehydroquinate (DHQ). This is 3-dehydroquinate synthase from Pseudomonas putida (strain ATCC 700007 / DSM 6899 / JCM 31910 / BCRC 17059 / LMG 24140 / F1).